The chain runs to 448 residues: tRNA modification GTPase MnmE (448 aa).

(6S)-5-formyl-5,6,7,8-tetrahydrofolate-binding residues include R22, E83, and R122. The TrmE-type G domain maps to 219 to 369; sequence GVKTVIVGRP…LESEILKTLK (151 aa). N229 is a binding site for K(+). Residues 229 to 234, 248 to 254, and 273 to 276 each bind GTP; these read NVGKSS, SDIAGTT, and DTAG. S233 serves as a coordination point for Mg(2+). S248, I250, and T253 together coordinate K(+). Mg(2+) is bound at residue T254. (6S)-5-formyl-5,6,7,8-tetrahydrofolate is bound at residue K448.

Belongs to the TRAFAC class TrmE-Era-EngA-EngB-Septin-like GTPase superfamily. TrmE GTPase family. As to quaternary structure, homodimer. Heterotetramer of two MnmE and two MnmG subunits. K(+) is required as a cofactor.

The protein localises to the cytoplasm. In terms of biological role, exhibits a very high intrinsic GTPase hydrolysis rate. Involved in the addition of a carboxymethylaminomethyl (cmnm) group at the wobble position (U34) of certain tRNAs, forming tRNA-cmnm(5)s(2)U34. This Acholeplasma laidlawii (strain PG-8A) protein is tRNA modification GTPase MnmE.